The sequence spans 334 residues: MAGIASTVAVMGAGAWGTALAKVLADAGGEVTLWARRAEVADQINTTRYNPDYLPGALLPPSIHATADAEEALGGASTVLLGVPAQTMRANLERWAPLLPEGATLVSLAKGIELGTLMRMSQVIISVTGAEPPQVAVISGPNLASEIAECQPAATVVACSDSGRAVALQRALNSGYFRPYTNADVVGTEIGGACKNIIALACGMAVGIGLGENTAAAIITRGLAEIIRLGTALGANGATLAGLAGVGDLVATCTSPRSRNRSFGERLGRGETLQSAGKACHVVEGVTSCESVLALASSYDVEMPLTDAVHRVCHKGLSVDEAITLLLGRRTKPE.

NADPH-binding residues include W16, R36, R37, and K110. Sn-glycerol 3-phosphate contacts are provided by K110 and G140. A144 contributes to the NADPH binding site. K195, D248, S258, R259, and N260 together coordinate sn-glycerol 3-phosphate. Residue K195 is the Proton acceptor of the active site. R259 contributes to the NADPH binding site. NADPH-binding residues include V282 and E284.

Belongs to the NAD-dependent glycerol-3-phosphate dehydrogenase family.

Its subcellular location is the cytoplasm. It catalyses the reaction sn-glycerol 3-phosphate + NAD(+) = dihydroxyacetone phosphate + NADH + H(+). It carries out the reaction sn-glycerol 3-phosphate + NADP(+) = dihydroxyacetone phosphate + NADPH + H(+). It participates in membrane lipid metabolism; glycerophospholipid metabolism. Its function is as follows. Catalyzes the reduction of the glycolytic intermediate dihydroxyacetone phosphate (DHAP) to sn-glycerol 3-phosphate (G3P), the key precursor for phospholipid synthesis. This is Glycerol-3-phosphate dehydrogenase [NAD(P)+] 2 from Mycobacterium tuberculosis (strain ATCC 25618 / H37Rv).